Here is a 148-residue protein sequence, read N- to C-terminus: HTH-type transcriptional regulator Ptr1 (148 aa).

Positions 2 to 63 (LDRIDLKILR…SINPKNLGFE (62 aa)) constitute an HTH asnC-type domain. The H-T-H motif DNA-binding region spans 21 to 40 (FREIGRELGISEGTVRNRVK).

In terms of assembly, homodimer.

Functionally, participates in positive as well as negative regulation of transcription. Binds to its own promoter. This chain is HTH-type transcriptional regulator Ptr1 (ptr1), found in Methanocaldococcus jannaschii (strain ATCC 43067 / DSM 2661 / JAL-1 / JCM 10045 / NBRC 100440) (Methanococcus jannaschii).